The primary structure comprises 834 residues: Taste receptor type 1 member 2 (834 aa).

Positions 1–19 are cleaved as a signal peptide; sequence MGPRARTVCFLFFLLWVLA. Residues 20 to 561 lie on the Extracellular side of the membrane; sequence ELAENSDFHL…SFLEWHEAAT (542 aa). N-linked (GlcNAc...) asparagine glycosylation is found at asparagine 84, asparagine 292, asparagine 312, asparagine 363, asparagine 423, asparagine 482, and asparagine 522. Residues 562–582 form a helical membrane-spanning segment; the sequence is IAVALLAALGFLXXXXXXXXX. The Cytoplasmic portion of the chain corresponds to 583-597; the sequence is XXXXXXPMVRSAGGP. Residues 598-618 traverse the membrane as a helical segment; that stretch reads MCFLMLTLLLVAYMVVPVYVG. Residues 619–630 are Extracellular-facing; it reads PPKVTTCLCRQA. Residues 631-651 traverse the membrane as a helical segment; it reads LFPVCFTICISCITMRSFQIV. At 652–676 the chain is on the cytoplasmic side; that stretch reads CVFKMASRFPRAYSYWVRYQGSYVS. Residues 677–697 form a helical membrane-spanning segment; the sequence is VAFITALKVVTVVISLLATGL. Over 698–722 the chain is Extracellular; that stretch reads NPTTRADTDDPKIMIISCNPNYRNS. The helical transmembrane segment at 723–743 threads the bilayer; the sequence is LLFNTSLDLLLSVVGFSFAYM. Over 744 to 755 the chain is Cytoplasmic; sequence GKELPTNYNEAK. Residues 756 to 776 form a helical membrane-spanning segment; sequence FITFSMTFYFTSSVSLCTFMS. Topologically, residues 777–779 are extracellular; the sequence is VYD. The helical transmembrane segment at 780–800 threads the bilayer; that stretch reads GVLVTIVDLLVTVFNLLAISL. Over 801-834 the chain is Cytoplasmic; that stretch reads GYFGPKCYMILFYPERNTPAYFNSMIQGYTMRRD.

Belongs to the G-protein coupled receptor 3 family. TAS1R subfamily. Forms heterodimers with TAS1R3.

The protein localises to the cell membrane. Putative taste receptor. TAS1R2/TAS1R3 recognizes diverse natural and synthetic sweeteners. In Cebuella pygmaea (Pygmy marmoset), this protein is Taste receptor type 1 member 2 (TAS1R2).